Reading from the N-terminus, the 110-residue chain is Large ribosomal subunit protein uL23c (110 aa).

Belongs to the universal ribosomal protein uL23 family. As to quaternary structure, part of the 50S ribosomal subunit.

The protein localises to the plastid. It localises to the chloroplast. Binds to 23S rRNA. This Porphyra purpurea (Red seaweed) protein is Large ribosomal subunit protein uL23c (rpl23).